A 98-amino-acid chain; its full sequence is MLDIQTHMDFAGQGKAERWSRFIITFFGIVGLVYGAFVQQFSQTVYILGAGFVLSSLITIPPWPLYRRNALKWQKPIDTDAKSSSSESGDEGKKKKKQ.

Over M1–R18 the chain is Cytoplasmic. Residues W19–V38 traverse the membrane as a helical segment. Residues Q39–S42 lie on the Lumenal side of the membrane. A helical membrane pass occupies residues Q43–L65. Over Y66 to Q98 the chain is Cytoplasmic. The disordered stretch occupies residues D78–Q98. Phosphoserine is present on residues S84, S85, S86, and S88.

It belongs to the SPCS1 family. In terms of assembly, component of the signal peptidase complex (SPC) composed of a catalytic subunit twr/SEC11 and three accessory subunits Spase12/SPCS1, Spase25/SPCS2 and Spase22-23/SPCS3. The complex induces a local thinning of the ER membrane which is used to measure the length of the signal peptide (SP) h-region of protein substrates. This ensures the selectivity of the complex towards h-regions shorter than 18-20 amino acids.

The protein localises to the endoplasmic reticulum membrane. Functionally, component of the signal peptidase complex (SPC) which catalyzes the cleavage of N-terminal signal sequences from nascent proteins as they are translocated into the lumen of the endoplasmic reticulum. Dispensable for SPC enzymatic activity. In terms of biological role, (Microbial infection) Plays an important role in infection by flaviviruses such as West Nile virus and Dengue virus type 2. This Drosophila melanogaster (Fruit fly) protein is Signal peptidase complex subunit 1 (Spase12).